The sequence spans 338 residues: Ketol-acid reductoisomerase (NADP(+)) (338 aa).

Positions 1 to 181 constitute a KARI N-terminal Rossmann domain; sequence MKVFYDKDCD…GGGKAGIIET (181 aa). NADP(+)-binding positions include 24-27, Arg47, and Ser52; that span reads YGSQ. His107 is a catalytic residue. Residue Gly133 coordinates NADP(+). Residues 182–327 form the KARI C-terminal knotted domain; that stretch reads TFREETETDL…EKLRAMMPWI (146 aa). Mg(2+) contacts are provided by Asp190, Glu194, Glu226, and Glu230. Ser251 contributes to the substrate binding site.

Belongs to the ketol-acid reductoisomerase family. Mg(2+) is required as a cofactor.

The catalysed reaction is (2R)-2,3-dihydroxy-3-methylbutanoate + NADP(+) = (2S)-2-acetolactate + NADPH + H(+). It carries out the reaction (2R,3R)-2,3-dihydroxy-3-methylpentanoate + NADP(+) = (S)-2-ethyl-2-hydroxy-3-oxobutanoate + NADPH + H(+). It functions in the pathway amino-acid biosynthesis; L-isoleucine biosynthesis; L-isoleucine from 2-oxobutanoate: step 2/4. Its pathway is amino-acid biosynthesis; L-valine biosynthesis; L-valine from pyruvate: step 2/4. Functionally, involved in the biosynthesis of branched-chain amino acids (BCAA). Catalyzes an alkyl-migration followed by a ketol-acid reduction of (S)-2-acetolactate (S2AL) to yield (R)-2,3-dihydroxy-isovalerate. In the isomerase reaction, S2AL is rearranged via a Mg-dependent methyl migration to produce 3-hydroxy-3-methyl-2-ketobutyrate (HMKB). In the reductase reaction, this 2-ketoacid undergoes a metal-dependent reduction by NADPH to yield (R)-2,3-dihydroxy-isovalerate. This Albidiferax ferrireducens (strain ATCC BAA-621 / DSM 15236 / T118) (Rhodoferax ferrireducens) protein is Ketol-acid reductoisomerase (NADP(+)).